Here is a 115-residue protein sequence, read N- to C-terminus: Secreted RxLR effector protein 2 (115 aa).

Residues 1–22 (MICRSPLIVVMLFVIAAHTVLA) form the signal peptide. The RxLR-dEER motif lies at 57–82 (RFLRQETTFEKKLGVNDVHAVHAEER).

Belongs to the RxLR effector family.

It localises to the secreted. The protein localises to the host cytoplasm. Its subcellular location is the host nucleus. Effector that acts as a broad suppressor of cell death to interrupt plant immunity. Inhibits cell death induced by cell death-inducing proteins, including the PAMP elicitor INF1 from P.infestans. The chain is Secreted RxLR effector protein 2 from Plasmopara viticola (Downy mildew of grapevine).